A 78-amino-acid chain; its full sequence is Molt-inhibiting hormone (78 aa).

Cystine bridges form between cysteine 7/cysteine 44, cysteine 24/cysteine 40, and cysteine 27/cysteine 53.

It localises to the secreted. Inhibits Y-organs where molting hormone (ecdysteroid) is secreted. A molting cycle is initiated when MIH secretion diminishes or stops. Also has significant hyperglycemic hormone (CHH) activity. The chain is Molt-inhibiting hormone from Cancer pagurus (Rock crab).